The following is a 164-amino-acid chain: Transcriptional repressor NrdR (164 aa).

A zinc finger lies at 3–34 (CPFCRHDDTQVVDSRVSEDGAAIRRRRRCPAC). Residues 49–139 (PSVVKKDGSR…VYRRFEDVSE (91 aa)) form the ATP-cone domain.

The protein belongs to the NrdR family. The cofactor is Zn(2+).

In terms of biological role, negatively regulates transcription of bacterial ribonucleotide reductase nrd genes and operons by binding to NrdR-boxes. The polypeptide is Transcriptional repressor NrdR (Paraburkholderia phymatum (strain DSM 17167 / CIP 108236 / LMG 21445 / STM815) (Burkholderia phymatum)).